Here is a 114-residue protein sequence, read N- to C-terminus: Large ribosomal subunit protein uL22 (114 aa).

The protein belongs to the universal ribosomal protein uL22 family. As to quaternary structure, part of the 50S ribosomal subunit.

This protein binds specifically to 23S rRNA; its binding is stimulated by other ribosomal proteins, e.g. L4, L17, and L20. It is important during the early stages of 50S assembly. It makes multiple contacts with different domains of the 23S rRNA in the assembled 50S subunit and ribosome. In terms of biological role, the globular domain of the protein is located near the polypeptide exit tunnel on the outside of the subunit, while an extended beta-hairpin is found that lines the wall of the exit tunnel in the center of the 70S ribosome. This Streptococcus mutans serotype c (strain ATCC 700610 / UA159) protein is Large ribosomal subunit protein uL22.